Reading from the N-terminus, the 245-residue chain is tRNA1(Val) (adenine(37)-N6)-methyltransferase (245 aa).

This sequence belongs to the methyltransferase superfamily. tRNA (adenine-N(6)-)-methyltransferase family.

It localises to the cytoplasm. The enzyme catalyses adenosine(37) in tRNA1(Val) + S-adenosyl-L-methionine = N(6)-methyladenosine(37) in tRNA1(Val) + S-adenosyl-L-homocysteine + H(+). In terms of biological role, specifically methylates the adenine in position 37 of tRNA(1)(Val) (anticodon cmo5UAC). This chain is tRNA1(Val) (adenine(37)-N6)-methyltransferase, found in Escherichia coli (strain UTI89 / UPEC).